The following is a 372-amino-acid chain: Cytochrome b (372 aa).

Transmembrane regions (helical) follow at residues phenylalanine 25–isoleucine 45, tryptophan 69–isoleucine 90, tryptophan 105–leucine 125, and phenylalanine 170–methionine 190. Heme b contacts are provided by histidine 75 and histidine 89. Residues histidine 174 and histidine 188 each contribute to the heme b site. Histidine 193 provides a ligand contact to a ubiquinone. A run of 4 helical transmembrane segments spans residues tyrosine 218–methionine 238, leucine 280–histidine 300, isoleucine 312–threonine 332, and phenylalanine 339–proline 358.

Belongs to the cytochrome b family. The cytochrome bc1 complex contains 3 respiratory subunits (MT-CYB, CYC1 and UQCRFS1), 2 core proteins (UQCRC1 and UQCRC2) and probably 6 low-molecular weight proteins. Heme b serves as cofactor.

Its subcellular location is the mitochondrion inner membrane. In terms of biological role, component of the ubiquinol-cytochrome c reductase complex (complex III or cytochrome b-c1 complex) that is part of the mitochondrial respiratory chain. The b-c1 complex mediates electron transfer from ubiquinol to cytochrome c. Contributes to the generation of a proton gradient across the mitochondrial membrane that is then used for ATP synthesis. The chain is Cytochrome b (MT-CYB) from Pseudechis australis (Mulga snake).